Reading from the N-terminus, the 220-residue chain is Guanylate kinase (220 aa).

The Guanylate kinase-like domain maps to 15-194; sequence GLMLVISSPS…ALDAVQSIVK (180 aa). 22–29 serves as a coordination point for ATP; that stretch reads SPSGAGKS.

This sequence belongs to the guanylate kinase family.

The protein localises to the cytoplasm. It catalyses the reaction GMP + ATP = GDP + ADP. Functionally, essential for recycling GMP and indirectly, cGMP. This chain is Guanylate kinase, found in Rhizobium johnstonii (strain DSM 114642 / LMG 32736 / 3841) (Rhizobium leguminosarum bv. viciae).